A 513-amino-acid polypeptide reads, in one-letter code: MNLDSIHRLIEETQIFQMQQSSIKSRGDMVAPASPPRDTCNTCFPLHGLQSHAAHNFCAHSYNTNKWDICEELRLRELEEVKARAAQMEKTMRWWSDCTANWREKWSKVRAERNSAREEGRQLRIKLEMAMKELSTLKKKQSLPPQKEALEAKVTQDLKLPGFVEESCEHTDQFQLSSQMHESIREYLVKRQFSTKEDTNNKEQGVVIDSLKLSEEMKPNLDGVDLFNNGGSGNGETKTGLRLKAINLPLENEVTEISALQVHLDEFQKILWKEREMRTALEKEIERLESALSLWKWKYEELKESKPKNVKEFDILLGQHNDEMQELSGNIKEESKSQNSKDRVICELRAELERLQAENTSEWDKREILEREKQGLERENRRLKIQVKEMEELLDKKNRLSANSQSPDFKMSQIDLQEKNQELLNLQHAYYKLNRQYQANIAELTHANNRVDQNEAEVKKLRLRVEELKQGLNQKEDELDDSLNQIRKLQRSLDEEKERNENLETELRHLQNW.

The interval 1–217 is required for centriolar localization and for interaction with CEP250, CROCC, LRRC45 and NEK2; that stretch reads MNLDSIHRLI…IDSLKLSEEM (217 aa). Phosphoserine is present on residues Ser21, Ser22, Ser34, Ser135, Ser142, Ser194, and Ser210. Positions 72–142 form a coiled coil; it reads ELRLRELEEV…ELSTLKKKQS (71 aa). Coiled coils occupy residues 268–337 and 363–513; these read QKIL…ESKS and WDKR…LQNW. Phosphoserine occurs at positions 401, 404, and 406. A disordered region spans residues 493 to 513; that stretch reads LDEEKERNENLETELRHLQNW.

In terms of assembly, interacts (via N-terminus) with centriolar protein CEP250/CNAP1; the interaction results in recruitment of CCDC102B to the proximal ends of centrioles. Interacts (via N-terminus) with CROCC/rootletin and LRRC45. Interacts (via N-terminus) with serine/threonine-protein kinase NEK2; the interaction results in phosphorylation of CCDC102B. Post-translationally, phosphorylated directly or indirectly by NEK2 during mitosis which causes dissociation of CCDC102B from the centrosome and allows for centrosome separation.

It localises to the cytoplasm. Its subcellular location is the cytoskeleton. The protein localises to the microtubule organizing center. The protein resides in the centrosome. It is found in the centriole. Functionally, during interphase, forms fibers at the proximal ends of centrioles to maintain centrosome cohesion. During mitosis, dissociates from the centrosome following phosphorylation to allow centrosome separation. Contributes to CROCC/rootletin filament formation. This Homo sapiens (Human) protein is Coiled-coil domain-containing protein 102B (CCDC102B).